The sequence spans 714 residues: Interferon-induced GTP-binding protein Mx2 (714 aa).

The disordered stretch occupies residues 1-89; sequence MSMSYRALKF…QRSKGSENNL (89 aa). Composition is skewed to polar residues over residues 61–70 and 79–88; these read NNFNQLNLDP and QQRSKGSENN. The region spanning 115–386 is the Dynamin-type G domain; it reads DLALPAIAVI…LIWHINKSLP (272 aa). Positions 125–132 are G1 motif; sequence GDQSSGKS. 125–132 lines the GTP pocket; it reads GDQSSGKS. Residues 150-152 form a G2 motif region; sequence ITR. Positions 224–227 are G3 motif; sequence DLPG. GTP is bound by residues 224–228 and 293–296; these read DLPGI and TKPD. The G4 motif stretch occupies residues 293-296; that stretch reads TKPD. The interval 325 to 328 is G5 motif; sequence KCRG. The 92-residue stretch at 622-713 folds into the GED domain; sequence IVEIGVHLNA…ALYEFPHFKS (92 aa).

This sequence belongs to the TRAFAC class dynamin-like GTPase superfamily. Dynamin/Fzo/YdjA family.

It localises to the cytoplasm. Its subcellular location is the nucleus. Interferon-induced dynamin-like GTPase with antiviral activity. The chain is Interferon-induced GTP-binding protein Mx2 (MX2) from Ovis aries (Sheep).